The chain runs to 425 residues: UPF0761 membrane protein XCV0968 (425 aa).

6 helical membrane-spanning segments follow: residues 48–68 (VFAL…FPAF), 105–125 (FTVA…HSIE), 154–174 (GTML…LPLF), 182–202 (LAEF…IVLI), 216–236 (ALPG…GFGF), and 250–270 (ALSA…SVLL).

It belongs to the UPF0761 family.

Its subcellular location is the cell inner membrane. This chain is UPF0761 membrane protein XCV0968, found in Xanthomonas euvesicatoria pv. vesicatoria (strain 85-10) (Xanthomonas campestris pv. vesicatoria).